Consider the following 192-residue polypeptide: Leucine-rich repeat-containing protein 51 (192 aa).

LRR repeat units follow at residues 49 to 71, 80 to 101, and 103 to 124; these read SLTQ…NQVV, NLAW…LTTF, and NLSV…NKLA. Positions 137-175 constitute an LRRCT domain; that stretch reads NPIEEEKGYRQYVLCNLPRITTFDFSGVTRADRSTAEVW.

Widely expressed in adult and embryonic tissues. Expressed in the developing choroid plexus from 12.5 dpc and in the epithelium of the developing airway tract from 14.5 dpc. Also expressed in the postnatal inner ear.

Its subcellular location is the cytoplasm. This is Leucine-rich repeat-containing protein 51 from Mus musculus (Mouse).